We begin with the raw amino-acid sequence, 443 residues long: tRNA modification GTPase MnmE (443 aa).

(6S)-5-formyl-5,6,7,8-tetrahydrofolate is bound by residues arginine 23, glutamate 81, and lysine 119. The TrmE-type G domain occupies 214-369 (GMRVAILGKP…LLSALKERAI (156 aa)). GTP contacts are provided by residues 224-229 (NVGKST), 243-249 (SEYPGTT), and 268-271 (DTAG). Mg(2+) contacts are provided by serine 228 and threonine 249. (6S)-5-formyl-5,6,7,8-tetrahydrofolate is bound at residue lysine 443.

Belongs to the TRAFAC class TrmE-Era-EngA-EngB-Septin-like GTPase superfamily. TrmE GTPase family. Homodimer. Heterotetramer of two MnmE and two MnmG subunits. K(+) is required as a cofactor.

Its subcellular location is the cytoplasm. Functionally, exhibits a very high intrinsic GTPase hydrolysis rate. Involved in the addition of a carboxymethylaminomethyl (cmnm) group at the wobble position (U34) of certain tRNAs, forming tRNA-cmnm(5)s(2)U34. The protein is tRNA modification GTPase MnmE of Anaplasma marginale (strain St. Maries).